The following is a 169-amino-acid chain: Non-specific lipid transfer protein GPI-anchored 11 (169 aa).

Positions 1 to 23 (MAYATILMIFSVVALMSGERAHA) are cleaved as a signal peptide. Disulfide bonds link Cys27–Cys70, Cys37–Cys54, Cys55–Cys95, and Cys68–Cys105. The GPI-anchor amidated serine moiety is linked to residue Ser146. A propeptide spans 147-169 (SDASLLSVSFAFVIFMALISSFY) (removed in mature form).

The protein belongs to the plant LTP family. In terms of tissue distribution, expressed in a vascular-specific manner, mainly in roots, and, to a lower extent, in hypocotyls, seedlings stems and flowers.

The protein resides in the cell membrane. It is found in the secreted. Probable lipid transfer protein. Proteoglycan-like factor that exhibits xylogen activity consisting in mediating local and inductive cell-cell interactions required for xylem differentiation. This is Non-specific lipid transfer protein GPI-anchored 11 from Arabidopsis thaliana (Mouse-ear cress).